Here is a 99-residue protein sequence, read N- to C-terminus: Small ribosomal subunit protein uS17 (99 aa).

It belongs to the universal ribosomal protein uS17 family. As to quaternary structure, part of the 30S ribosomal subunit.

One of the primary rRNA binding proteins, it binds specifically to the 5'-end of 16S ribosomal RNA. The chain is Small ribosomal subunit protein uS17 from Thermosipho melanesiensis (strain DSM 12029 / CIP 104789 / BI429).